The primary structure comprises 76 residues: MGSFSIWHWLIVLVIVMLVFGTKKLRNIGQDLGGAVKGFKDGMKDGEDKGAQPAASKELRDSTTIDVDAKEKSRQQ.

Residues 1–21 traverse the membrane as a helical segment; that stretch reads MGSFSIWHWLIVLVIVMLVFG. Basic and acidic residues-rich tracts occupy residues 41-50 and 57-76; these read DGMKDGEDKG and KELR…SRQQ. A disordered region spans residues 41 to 76; that stretch reads DGMKDGEDKGAQPAASKELRDSTTIDVDAKEKSRQQ.

Belongs to the TatA/E family. In terms of assembly, the Tat system comprises two distinct complexes: a TatABC complex, containing multiple copies of TatA, TatB and TatC subunits, and a separate TatA complex, containing only TatA subunits. Substrates initially bind to the TatABC complex, which probably triggers association of the separate TatA complex to form the active translocon.

It is found in the cell inner membrane. Functionally, part of the twin-arginine translocation (Tat) system that transports large folded proteins containing a characteristic twin-arginine motif in their signal peptide across membranes. TatA could form the protein-conducting channel of the Tat system. This is Sec-independent protein translocase protein TatA from Cupriavidus taiwanensis (strain DSM 17343 / BCRC 17206 / CCUG 44338 / CIP 107171 / LMG 19424 / R1) (Ralstonia taiwanensis (strain LMG 19424)).